A 568-amino-acid polypeptide reads, in one-letter code: Probable pectinesterase/pectinesterase inhibitor 23 (568 aa).

A signal peptide spans Met1–Ser33. The pectinesterase inhibitor 23 stretch occupies residues Arg45–Met198. N-linked (GlcNAc...) asparagine glycans are attached at residues Asn94, Asn210, and Asn316. The interval Pro251 to Asp548 is pectinesterase 23. The substrate site is built by Thr333 and Gln363. Asp386 (proton donor; for pectinesterase activity) is an active-site residue. Cysteines 400 and 420 form a disulfide. Asp407 serves as the catalytic Nucleophile; for pectinesterase activity. Arg475 and Trp477 together coordinate substrate.

In the N-terminal section; belongs to the PMEI family. This sequence in the C-terminal section; belongs to the pectinesterase family. As to expression, expressed in mature pollen grains in the anthers and on the stigma. Found in pollen tubes within the style.

It localises to the secreted. Its subcellular location is the cell wall. The catalysed reaction is [(1-&gt;4)-alpha-D-galacturonosyl methyl ester](n) + n H2O = [(1-&gt;4)-alpha-D-galacturonosyl](n) + n methanol + n H(+). Its pathway is glycan metabolism; pectin degradation; 2-dehydro-3-deoxy-D-gluconate from pectin: step 1/5. Acts in the modification of cell walls via demethylesterification of cell wall pectin. This is Probable pectinesterase/pectinesterase inhibitor 23 (PME23) from Arabidopsis thaliana (Mouse-ear cress).